The primary structure comprises 619 residues: DNA mismatch repair protein MutL (619 aa).

The protein belongs to the DNA mismatch repair MutL/HexB family.

In terms of biological role, this protein is involved in the repair of mismatches in DNA. It is required for dam-dependent methyl-directed DNA mismatch repair. May act as a 'molecular matchmaker', a protein that promotes the formation of a stable complex between two or more DNA-binding proteins in an ATP-dependent manner without itself being part of a final effector complex. This chain is DNA mismatch repair protein MutL, found in Xylella fastidiosa (strain 9a5c).